Consider the following 354-residue polypeptide: 3-dehydroquinate synthase (354 aa).

NAD(+) is bound by residues 69-74 (DGEAEK), 103-107 (GVIGD), 127-128 (TS), K140, and K149. Zn(2+)-binding residues include E182, H245, and H262.

The protein belongs to the sugar phosphate cyclases superfamily. Dehydroquinate synthase family. Co(2+) serves as cofactor. Zn(2+) is required as a cofactor. It depends on NAD(+) as a cofactor.

It localises to the cytoplasm. The enzyme catalyses 7-phospho-2-dehydro-3-deoxy-D-arabino-heptonate = 3-dehydroquinate + phosphate. It participates in metabolic intermediate biosynthesis; chorismate biosynthesis; chorismate from D-erythrose 4-phosphate and phosphoenolpyruvate: step 2/7. In terms of biological role, catalyzes the conversion of 3-deoxy-D-arabino-heptulosonate 7-phosphate (DAHP) to dehydroquinate (DHQ). In Colwellia psychrerythraea (strain 34H / ATCC BAA-681) (Vibrio psychroerythus), this protein is 3-dehydroquinate synthase.